We begin with the raw amino-acid sequence, 962 residues long: Nonribosomal peptide synthetase atqA (962 aa).

The adenylation (A) domain stretch occupies residues 34–462 (AANTTEGIIA…DGRTKEMVNI (429 aa)). Residues 595–672 (SAEEATILSI…GLCQRIAATS (78 aa)) form the Carrier domain. Ser630 carries the post-translational modification O-(pantetheine 4'-phosphoryl)serine. The interval 694–951 (PLWLVHPGVG…KPEYVANFAK (258 aa)) is thioesterase (TE) domain.

The protein belongs to the NRP synthetase family.

It functions in the pathway secondary metabolite biosynthesis. In terms of biological role, nonribosomal peptide synthetase; part of the gene cluster that mediates the biosynthesis of asterriquinone CT5, a natural product that displays potential biological activities including antitumor and insulin mimic activities. The nonribosomal peptide synthetase atqA is responsible for the production of the benzoquinone derivative didemethylasterriquinone D (DDAQ D), via condensation of 2 indole pyruvic acid (IPA) molecules. The symmetric connectivity of the 2 IPA molecules is thought to arise by head-to-tail dual Claisen condensations catalyzed by the TE domain of atqA. DDAQ D represents the core structure of asterriquinones and is further modified by yet unidentified tailoring enzymes to lead to the production of asterriquinone CT5. The protein is Nonribosomal peptide synthetase atqA of Aspergillus terreus (strain NIH 2624 / FGSC A1156).